A 129-amino-acid polypeptide reads, in one-letter code: UPF0212 protein Mbar_A2902 (129 aa).

Belongs to the UPF0212 family.

The polypeptide is UPF0212 protein Mbar_A2902 (Methanosarcina barkeri (strain Fusaro / DSM 804)).